We begin with the raw amino-acid sequence, 404 residues long: 6-hydroxytryptophan 2,3-dioxygenase fscD (404 aa).

Histidine 341 is a binding site for heme b.

It belongs to the indoleamine 2,3-dioxygenase family. Requires heme as cofactor.

Its pathway is secondary metabolite biosynthesis. Functionally, 6-hydroxytryptophan 2,3-dioxygenase; part of the fragmented gene cluster that mediates the biosynthesis of fusarochromene, a tryptophan-derived metabolite closely related to a group of mycotoxins including fusarochromanone. Within the pathway, fscD is responsible of the cleavage of the pyrrole ring of 6-hydroxytryptophan. The first step of the pathway is the epimerization of L-tryptophan to D-tryptophan in the presence of the NRPS-like tryptophan epimerase fscC. D-tryptophan is subsequently hydroxylated by the tryptophan 6-hydroxylase fscE to yield 6-hydroxytryptophan. The pyrrole ring undergoes cleavaged by the tryptophan 2,3-dioxygenase fscD and is finally converted to 4-hydroxykyrunenine by the hydrolase fscH. The NRPS-like oxidoreductase fscA reduces the carboxyl group to primary alcohol and the DMATS-type prenyltransferase fscG performs prenylation, followed by the formation of a chromene ring catalyzed by the oxidoreductase fscI, which leads to desacetylfusarochromene. Epoxidation by fscF and rearrangement reactions of chromene double bonds convert compound desacetylfusarochromene to fusarochromanones. Although specific acetyltransferases were not found near the fsc gene cluster, several predicted enzymes containing the N-acetyltransferase superfamily domain are present in the genome of F.equiseti. These predicted enzymes may have the potential to convert desacetylfusarochromene to fusarochromene. The sequence is that of 6-hydroxytryptophan 2,3-dioxygenase fscD from Fusarium equiseti (Fusarium scirpi).